We begin with the raw amino-acid sequence, 424 residues long: Putative chloroquine resistance transporter (424 aa).

The Cytoplasmic portion of the chain corresponds to 1–56 (MTGMKKGKNKKKNVKNDERYKELDSLISNDSEIGNNSRWGGAKRICKLIGNEMRNN). A helical membrane pass occupies residues 57–77 (IYVYLLSILYLCVSVMNKVFS). At 78–88 (KRTLNKIGNYS) the chain is on the vacuolar side. N-linked (GlcNAc...) asparagine glycosylation occurs at Asn-86. The chain crosses the membrane as a helical span at residues 89–109 (FVTSEVHNMICTIVFQLLYFI). Residues 110–125 (YRKTSNPASRNESQKN) lie on the Cytoplasmic side of the membrane. A helical transmembrane segment spans residues 126–146 (FGWQFFLISLLDASTVIITMI). Residues 147 to 156 (GLTRTTGNIQ) lie on the Vacuolar side of the membrane. The helical transmembrane segment at 157-177 (SFIMQLIIPVNMYFCFIFLGY) threads the bilayer. The Cytoplasmic segment spans residues 178–180 (RYH). The chain crosses the membrane as a helical span at residues 181–201 (LFNYLGAFIILITIAAVETVL). Topologically, residues 202–209 (SYETQSDN) are vacuolar. A helical transmembrane segment spans residues 210–230 (SIIFNLIMIFALIPLSFSNMT). At 231–248 (REVVFKKHKINIIRLNAM) the chain is on the cytoplasmic side. A helical membrane pass occupies residues 249-269 (VALFQFFTSLLVLPVYNISFL). The Vacuolar portion of the chain corresponds to 270-317 (KEIYMPFSEMGTNINDGLRCLFYGQSTIVENCGVGMVKMCDQCEGAWK). 2 disulfide bridges follow: Cys-289–Cys-312 and Cys-301–Cys-309. The helical transmembrane segment at 318-338 (TFITYSFFNICDNLLVCYIID) threads the bilayer. At 339–346 (KFSTMTYT) the chain is on the cytoplasmic side. A helical transmembrane segment spans residues 347-367 (IVSCIQGPAITIAYYFKFLAG). Over 368–377 (DVVRQPRLLD) the chain is Vacuolar. Residues 378-398 (FLTLFGYLLGTIIYRIGNIIL) form a helical membrane-spanning segment. Residues 399-424 (EKKKMLKALNTDGSEAELTSIETSTA) lie on the Cytoplasmic side of the membrane.

Belongs to the CRT-like transporter family.

The protein resides in the vacuole membrane. In terms of biological role, nutrient transporter. Involved in maintaining the osmotic homeostasis of the digestive vacuole. The chain is Putative chloroquine resistance transporter from Plasmodium chabaudi.